A 102-amino-acid chain; its full sequence is Complement inhibitor RaCI3 (102 aa).

A signal peptide spans 1 to 24 (MAALNGLVLLLLTISAMFISECYS). 3 cysteine pairs are disulfide-bonded: Cys-37–Cys-61, Cys-42–Cys-63, and Cys-57–Cys-78.

The protein belongs to the RaCI family. Expressed in salivary glands.

Its subcellular location is the secreted. Functionally, complement inhibitor. Prevents complement-mediated C5 activation by binding to C5. Binds C5 at a different binding site than the other tick complement inhibitors OmCI and CirpT1, and the drug eculizumab. Inhibits complement in human and guinea pig but not in other species tested (rabbit, rat, mouse, and pig). The sequence is that of Complement inhibitor RaCI3 from Dermacentor andersoni (Rocky mountain wood tick).